Consider the following 232-residue polypeptide: Ribose-5-phosphate isomerase A (232 aa).

Substrate-binding positions include 28–31, 83–86, and 96–99; these read TGST, DGAD, and KGGG. The active-site Proton acceptor is glutamate 105. Lysine 123 is a substrate binding site.

The protein belongs to the ribose 5-phosphate isomerase family. As to quaternary structure, homodimer.

The catalysed reaction is aldehydo-D-ribose 5-phosphate = D-ribulose 5-phosphate. It participates in carbohydrate degradation; pentose phosphate pathway; D-ribose 5-phosphate from D-ribulose 5-phosphate (non-oxidative stage): step 1/1. Functionally, catalyzes the reversible conversion of ribose-5-phosphate to ribulose 5-phosphate. The protein is Ribose-5-phosphate isomerase A of Rhizobium etli (strain CIAT 652).